Consider the following 864-residue polypeptide: Protein translocase subunit SecA (864 aa).

Residues glutamine 87, 105-109 (GEGKT), and aspartate 512 contribute to the ATP site.

This sequence belongs to the SecA family. As to quaternary structure, monomer and homodimer. Part of the essential Sec protein translocation apparatus which comprises SecA, SecYEG and auxiliary proteins SecDF-YajC and YidC.

Its subcellular location is the cell inner membrane. It is found in the cytoplasm. It carries out the reaction ATP + H2O + cellular proteinSide 1 = ADP + phosphate + cellular proteinSide 2.. Its function is as follows. Part of the Sec protein translocase complex. Interacts with the SecYEG preprotein conducting channel. Has a central role in coupling the hydrolysis of ATP to the transfer of proteins into and across the cell membrane, serving as an ATP-driven molecular motor driving the stepwise translocation of polypeptide chains across the membrane. The protein is Protein translocase subunit SecA of Buchnera aphidicola subsp. Cinara cedri (strain Cc).